A 173-amino-acid chain; its full sequence is Catabolic 3-dehydroquinase (173 aa).

The active-site Proton acceptor is Y26. Substrate is bound by residues N102, H108, and D115. H128 acts as the Proton donor in catalysis. Substrate-binding positions include V129–S130 and R139.

It belongs to the type-II 3-dehydroquinase family. In terms of assembly, homododecamer. Adopts a ring-like structure, composed of an arrangement of two hexameric rings stacked on top of one another.

It carries out the reaction 3-dehydroquinate = 3-dehydroshikimate + H2O. Its pathway is aromatic compound metabolism; 3,4-dihydroxybenzoate biosynthesis; 3,4-dihydroxybenzoate from 3-dehydroquinate: step 1/2. Functionally, 3-dehydroquinate dehydratase; part of the qa gene cluster that mediates the catabolism of quinic acid (QA) and as such, allows the use of QA as a sole carbon source. Catalyzes the second reaction in the inducible quinic acid catabolic pathway by converting 3-dehydroquinate into 3-dehydroshikimate. The qa cluster encodes 3 inducible enymes (qa-2, qa-3 and qa-4) catalyzing the first three reactions in the catabolism of quinic acid to protocatechuic acid (also known as 3,4-Dihydroxybenzoic acid). This Neurospora crassa (strain ATCC 24698 / 74-OR23-1A / CBS 708.71 / DSM 1257 / FGSC 987) protein is Catabolic 3-dehydroquinase.